We begin with the raw amino-acid sequence, 357 residues long: Peptide chain release factor 1 (357 aa).

Gln234 carries the N5-methylglutamine modification.

It belongs to the prokaryotic/mitochondrial release factor family. Post-translationally, methylated by PrmC. Methylation increases the termination efficiency of RF1.

The protein localises to the cytoplasm. Peptide chain release factor 1 directs the termination of translation in response to the peptide chain termination codons UAG and UAA. This chain is Peptide chain release factor 1, found in Lactococcus lactis subsp. cremoris (strain MG1363).